Here is a 477-residue protein sequence, read N- to C-terminus: Trigger factor (477 aa).

A PPIase FKBP-type domain is found at 174–261; sequence GDIAVVSFKG…LKDLKEKELP (88 aa). The segment at 435–477 is disordered; that stretch reads VNEKTTKTSKATKTSKTTKATKTATKTTKTTKTTKTQNKKEKK. Residues 442–470 are compositionally biased toward low complexity; it reads TSKATKTSKTTKATKTATKTTKTTKTTKT.

This sequence belongs to the FKBP-type PPIase family. Tig subfamily.

It localises to the cytoplasm. The catalysed reaction is [protein]-peptidylproline (omega=180) = [protein]-peptidylproline (omega=0). Functionally, involved in protein export. Acts as a chaperone by maintaining the newly synthesized protein in an open conformation. Functions as a peptidyl-prolyl cis-trans isomerase. The polypeptide is Trigger factor (Prochlorococcus marinus (strain MIT 9301)).